The sequence spans 87 residues: UPF0250 protein YE3006 (87 aa).

It belongs to the UPF0250 family.

The sequence is that of UPF0250 protein YE3006 from Yersinia enterocolitica serotype O:8 / biotype 1B (strain NCTC 13174 / 8081).